The sequence spans 181 residues: Ribulose bisphosphate carboxylase small subunit, chloroplastic 2 (181 aa).

The N-terminal 57 residues, 1 to 57 (MASSVISSAAVATRTNVTQAGSMIAPFTGLKSAATFPVSRKQNLDITSIASNGGRVR), are a transit peptide targeting the chloroplast.

This sequence belongs to the RuBisCO small chain family. As to quaternary structure, heterohexadecamer of 8 large and 8 small subunits.

The protein localises to the plastid. Its subcellular location is the chloroplast. Its function is as follows. RuBisCO catalyzes two reactions: the carboxylation of D-ribulose 1,5-bisphosphate, the primary event in carbon dioxide fixation, as well as the oxidative fragmentation of the pentose substrate. Both reactions occur simultaneously and in competition at the same active site. Although the small subunit is not catalytic it is essential for maximal activity. This is Ribulose bisphosphate carboxylase small subunit, chloroplastic 2 from Solanum tuberosum (Potato).